Here is a 524-residue protein sequence, read N- to C-terminus: CTP synthase (524 aa).

The tract at residues 1-263 (MKKYVIVTGG…HEKIASKLNV (263 aa)) is amidoligase domain. Residue Ser13 participates in CTP binding. Ser13 is a binding site for UTP. ATP contacts are provided by residues 14–19 (GIGKGI) and Asp71. The Mg(2+) site is built by Asp71 and Glu137. Residues 144–146 (DIE), 184–189 (KTKPTQ), and Lys220 contribute to the CTP site. UTP is bound by residues 184–189 (KTKPTQ) and Lys220. A Glutamine amidotransferase type-1 domain is found at 282–524 (RIALVGKYLG…YLRKVLEGSQ (243 aa)). Gly342 serves as a coordination point for L-glutamine. The active-site Nucleophile; for glutamine hydrolysis is Cys369. Residues 370–373 (LGMQ), Glu393, and Arg451 contribute to the L-glutamine site. Active-site residues include His499 and Glu501.

It belongs to the CTP synthase family. As to quaternary structure, homotetramer.

The enzyme catalyses UTP + L-glutamine + ATP + H2O = CTP + L-glutamate + ADP + phosphate + 2 H(+). The catalysed reaction is L-glutamine + H2O = L-glutamate + NH4(+). It catalyses the reaction UTP + NH4(+) + ATP = CTP + ADP + phosphate + 2 H(+). Its pathway is pyrimidine metabolism; CTP biosynthesis via de novo pathway; CTP from UDP: step 2/2. Its activity is regulated as follows. Allosterically activated by GTP, when glutamine is the substrate; GTP has no effect on the reaction when ammonia is the substrate. The allosteric effector GTP functions by stabilizing the protein conformation that binds the tetrahedral intermediate(s) formed during glutamine hydrolysis. Inhibited by the product CTP, via allosteric rather than competitive inhibition. In terms of biological role, catalyzes the ATP-dependent amination of UTP to CTP with either L-glutamine or ammonia as the source of nitrogen. Regulates intracellular CTP levels through interactions with the four ribonucleotide triphosphates. The sequence is that of CTP synthase from Thermotoga maritima (strain ATCC 43589 / DSM 3109 / JCM 10099 / NBRC 100826 / MSB8).